A 90-amino-acid polypeptide reads, in one-letter code: Probable Fe(2+)-trafficking protein (90 aa).

It belongs to the Fe(2+)-trafficking protein family.

Functionally, could be a mediator in iron transactions between iron acquisition and iron-requiring processes, such as synthesis and/or repair of Fe-S clusters in biosynthetic enzymes. The protein is Probable Fe(2+)-trafficking protein of Koribacter versatilis (strain Ellin345).